The following is a 204-amino-acid chain: Bcl-2-like protein 10 (204 aa).

Residues 86 to 105 (LSDSPGPTWGRVVTLVTFAG) carry the BH1 motif. A required for Ca(2+) binding region spans residues 118–133 (WKKWGFQPRLKEQEGD). Residues Lys119, Lys120, and Lys128 each participate in a glycyl lysine isopeptide (Lys-Gly) (interchain with G-Cter in ubiquitin) cross-link. The short motif at 156-167 (WLQAQGGWDGFC) is the BH2 element. The chain crosses the membrane as a helical span at residues 183-200 (LVQAFLSCLLTTAFIYLW).

Belongs to the Bcl-2 family. In terms of assembly, interacts with BAX. Interacts with BCL2 and BCL2L1/BCLX. Interacts with APAF1. Interacts with ITPR1, ITPR2 and ITPR3; the interaction with ITPR1 is increased in the presence of AHCLY1. Interacts with AHCYL1. Interacts with HIP1R (via ENTH and I/LWEQ domains). Interacts with CASP9. Interacts with BCL2L11/BIM. Interacts with BIK. Interacts with UBQLN4. Interacts with NME2/NM23-H2. Interacts with PMAIP1/NOXA. Interacts with TPX2. Interacts with UBQLN1; in the cytoplasm. Interacts (via BH1 domain) with BECN1. Requires Ca(2+) as cofactor. Post-translationally, monoubiquitinated by UBQLN1; results in stabilization of BCL2L10 protein abundance and in relocalization from mitochondria to cytoplasm. In terms of tissue distribution, widely expressed in adult tissues. Preferentially expressed in lung, liver and kidney.

It is found in the mitochondrion. It localises to the nucleus membrane. The protein resides in the endoplasmic reticulum. The protein localises to the cytoplasm. Its subcellular location is the cytoskeleton. It is found in the spindle. In terms of biological role, promotes cell survival by suppressing apoptosis induced by BAX but not BAK. Increases binding of AHCYL1/IRBIT to ITPR1. Reduces ITPR1-mediated calcium release from the endoplasmic reticulum cooperatively with AHCYL1/IRBIT under normal cellular conditions. Under apoptotic stress conditions, dissociates from ITPR1 and is displaced from mitochondria-associated endoplasmic reticulum membranes, leading to increased Ca(2+) transfer to mitochondria which promotes apoptosis. Required for the correct formation of the microtubule organizing center during oocyte cell division, potentially via regulation of protein abundance and localization of other microtubule organizing center components such as AURKA and TPX2. In Homo sapiens (Human), this protein is Bcl-2-like protein 10.